The primary structure comprises 702 residues: Ribosomal RNA large subunit methyltransferase K/L (702 aa).

The THUMP domain maps to 43-154 (LIYQSLMWSR…KETAHISLDL (112 aa)).

It belongs to the methyltransferase superfamily. RlmKL family.

It localises to the cytoplasm. The enzyme catalyses guanosine(2445) in 23S rRNA + S-adenosyl-L-methionine = N(2)-methylguanosine(2445) in 23S rRNA + S-adenosyl-L-homocysteine + H(+). The catalysed reaction is guanosine(2069) in 23S rRNA + S-adenosyl-L-methionine = N(2)-methylguanosine(2069) in 23S rRNA + S-adenosyl-L-homocysteine + H(+). Specifically methylates the guanine in position 2445 (m2G2445) and the guanine in position 2069 (m7G2069) of 23S rRNA. This chain is Ribosomal RNA large subunit methyltransferase K/L, found in Enterobacter sp. (strain 638).